Here is a 521-residue protein sequence, read N- to C-terminus: Amidase (521 aa).

Catalysis depends on charge relay system residues Lys-96 and Ser-171. Residues 155-174 (SGPVRNPWDRQREAGGSSGG) form a disordered region. Residue Ser-195 is the Acyl-ester intermediate of the active site.

Belongs to the amidase family. As to quaternary structure, homodimer.

The enzyme catalyses a monocarboxylic acid amide + H2O = a monocarboxylate + NH4(+). Functionally, hydrolyzes propionamides efficiently, and also at a lower efficiency, acetamide, acrylamide and indoleacetamide. This enzyme seems to be stereospecific and can lead to the production of a single enantiomer. This chain is Amidase (amdA), found in Rhodococcus erythropolis (Arthrobacter picolinophilus).